Consider the following 400-residue polypeptide: Nicotinate phosphoribosyltransferase (400 aa).

At histidine 220 the chain carries Phosphohistidine; by autocatalysis.

The protein belongs to the NAPRTase family. In terms of processing, transiently phosphorylated on a His residue during the reaction cycle. Phosphorylation strongly increases the affinity for substrates and increases the rate of nicotinate D-ribonucleotide production. Dephosphorylation regenerates the low-affinity form of the enzyme, leading to product release.

It carries out the reaction nicotinate + 5-phospho-alpha-D-ribose 1-diphosphate + ATP + H2O = nicotinate beta-D-ribonucleotide + ADP + phosphate + diphosphate. Its pathway is cofactor biosynthesis; NAD(+) biosynthesis; nicotinate D-ribonucleotide from nicotinate: step 1/1. Catalyzes the synthesis of beta-nicotinate D-ribonucleotide from nicotinate and 5-phospho-D-ribose 1-phosphate at the expense of ATP. This is Nicotinate phosphoribosyltransferase from Escherichia coli O7:K1 (strain IAI39 / ExPEC).